Here is a 93-residue protein sequence, read N- to C-terminus: SH3 domain-binding glutamic acid-rich-like protein 3 (93 aa).

Ser-2 bears the N-acetylserine mark. In terms of domain architecture, Glutaredoxin spans Ser-2–Ala-93. O-linked (GalNAc...) threonine glycosylation occurs at Thr-9.

It belongs to the SH3BGR family. Homodimer. Interacts with MYO1C (via its IQ motifs); the interaction is dependent on calcium and takes place at membrane ruffles. May be glycosylated.

It localises to the cytoplasm. Its subcellular location is the cytosol. The protein resides in the cell projection. The protein localises to the ruffle membrane. It is found in the nucleus. Functionally, could act as a modulator of glutaredoxin biological activity. May play a role in cytoskeleton organization. The chain is SH3 domain-binding glutamic acid-rich-like protein 3 (SH3BGRL3) from Bos taurus (Bovine).